We begin with the raw amino-acid sequence, 289 residues long: Purine nucleoside phosphorylase (289 aa).

Met-1 is modified (N-acetylmethionine). Phosphate is bound by residues Ser-33, His-64, and 84-86 (RFH). Tyr-88 contacts a purine D-ribonucleoside. Ala-116 serves as a coordination point for phosphate. Positions 201 and 219 each coordinate a purine D-ribonucleoside. A phosphate-binding site is contributed by Ser-220. A purine D-ribonucleoside is bound by residues Asn-243 and His-257.

The protein belongs to the PNP/MTAP phosphorylase family. As to quaternary structure, homotrimer.

Its subcellular location is the cytoplasm. It carries out the reaction inosine + phosphate = alpha-D-ribose 1-phosphate + hypoxanthine. The catalysed reaction is guanosine + phosphate = alpha-D-ribose 1-phosphate + guanine. The enzyme catalyses 2'-deoxyguanosine + phosphate = 2-deoxy-alpha-D-ribose 1-phosphate + guanine. It catalyses the reaction 2'-deoxyinosine + phosphate = 2-deoxy-alpha-D-ribose 1-phosphate + hypoxanthine. It functions in the pathway purine metabolism; purine nucleoside salvage. In terms of biological role, catalyzes the phosphorolytic breakdown of the N-glycosidic bond in the beta-(deoxy)ribonucleoside molecules, with the formation of the corresponding free purine bases and pentose-1-phosphate. Preferentially acts on 6-oxopurine nucleosides including inosine and guanosine. The polypeptide is Purine nucleoside phosphorylase (Pnp) (Mus musculus (Mouse)).